The chain runs to 241 residues: Small ribosomal subunit protein uS3c (241 aa).

It belongs to the universal ribosomal protein uS3 family. Part of the 30S ribosomal subunit.

It is found in the plastid. This chain is Small ribosomal subunit protein uS3c (rps3), found in Helicosporidium sp. subsp. Simulium jonesii (Green alga).